The chain runs to 1193 residues: Nucleolar protein 6 (1193 aa).

Disordered regions lie at residues 1–69 and 1137–1193; these read MRFV…TKNV and KREQ…KVLK. 2 stretches are compositionally biased toward basic and acidic residues: residues 31–46 and 1151–1161; these read AGDH…KIAK and DANKAEEESKP. Ser35 carries the post-translational modification Phosphoserine. Residues 1162–1184 are compositionally biased toward basic residues; it reads KPKKHRQRKGTGKKALPKRKRLI.

The protein belongs to the NRAP family. Part of the small subunit (SSU) processome, composed of more than 70 proteins and the RNA chaperone small nucleolar RNA (snoRNA) U3. As to expression, expressed in nurse cells at stages 9-10 of oogenesis and exported to the oocyte.

The protein localises to the nucleus. Its subcellular location is the nucleolus. It is found in the chromosome. In terms of biological role, part of the small subunit (SSU) processome, first precursor of the small eukaryotic ribosomal subunit. During the assembly of the SSU processome in the nucleolus, many ribosome biogenesis factors, an RNA chaperone and ribosomal proteins associate with the nascent pre-rRNA and work in concert to generate RNA folding, modifications, rearrangements and cleavage as well as targeted degradation of pre-ribosomal RNA by the RNA exosome. The protein is Nucleolar protein 6 of Drosophila melanogaster (Fruit fly).